We begin with the raw amino-acid sequence, 715 residues long: Polyribonucleotide nucleotidyltransferase (715 aa).

Mg(2+) contacts are provided by aspartate 495 and aspartate 501. The KH domain occupies 562–621; it reads PRLLTLQIPPDMIGLVIGPGGKTVRGISEQYNVKVDISEEGLVTITAPNETNAKQARAAI. Residues 631-699 enclose the S1 motif domain; the sequence is GDVYLGRVTR…SKGRINLTRL (69 aa).

This sequence belongs to the polyribonucleotide nucleotidyltransferase family. It depends on Mg(2+) as a cofactor.

The protein resides in the cytoplasm. The enzyme catalyses RNA(n+1) + phosphate = RNA(n) + a ribonucleoside 5'-diphosphate. In terms of biological role, involved in mRNA degradation. Catalyzes the phosphorolysis of single-stranded polyribonucleotides processively in the 3'- to 5'-direction. The protein is Polyribonucleotide nucleotidyltransferase of Thermosynechococcus vestitus (strain NIES-2133 / IAM M-273 / BP-1).